Consider the following 142-residue polypeptide: Large ribosomal subunit protein uL13 (142 aa).

The protein belongs to the universal ribosomal protein uL13 family. As to quaternary structure, part of the 50S ribosomal subunit.

Functionally, this protein is one of the early assembly proteins of the 50S ribosomal subunit, although it is not seen to bind rRNA by itself. It is important during the early stages of 50S assembly. This chain is Large ribosomal subunit protein uL13, found in Chromobacterium violaceum (strain ATCC 12472 / DSM 30191 / JCM 1249 / CCUG 213 / NBRC 12614 / NCIMB 9131 / NCTC 9757 / MK).